Reading from the N-terminus, the 591-residue chain is Beta-fructofuranosidase, insoluble isoenzyme CWINV4 (591 aa).

Residues 1-22 (MAISNVISVLLLLLVLINLSNQ) form the signal peptide. Residues 61 to 64 (WIND), Gln80, Trp88, and 123 to 124 (WS) each bind substrate. Asp64 is an active-site residue. N-linked (GlcNAc...) asparagine glycans are attached at residues Asn145 and Asn182. Substrate is bound by residues 187 to 188 (RD), Glu242, and Asp276. Asn336, Asn472, and Asn565 each carry an N-linked (GlcNAc...) asparagine glycan. A disulfide bond links Cys436 and Cys484.

It belongs to the glycosyl hydrolase 32 family. As to expression, expressed in flowers, and seeds, and, to a lower extent, in seedlings.

The protein resides in the secreted. It is found in the extracellular space. Its subcellular location is the apoplast. The protein localises to the cell wall. It carries out the reaction Hydrolysis of terminal non-reducing beta-D-fructofuranoside residues in beta-D-fructofuranosides.. The protein is Beta-fructofuranosidase, insoluble isoenzyme CWINV4 (CWINV4) of Arabidopsis thaliana (Mouse-ear cress).